Consider the following 706-residue polypeptide: Transmembrane and coiled-coil domains protein 2 (706 aa).

Disordered stretches follow at residues 1 to 221 (MKRC…TTDT) and 251 to 280 (VALS…PDPQ). Phosphoserine is present on Ser6. Over residues 83–94 (GLKHLFHSRRRS) the composition is skewed to basic residues. Low complexity predominate over residues 102 to 112 (SQEAQQQQQQQ). Over residues 120-131 (PDEKERSPEMHR) the composition is skewed to basic and acidic residues. An Omega-N-methylarginine modification is found at Arg163. Positions 330–365 (KQVFEKKNQKSAQTIAQLHKKLEHYRRRLKEIEQNG) form a coiled coil. The residue at position 435 (Ser435) is a Phosphoserine. Residues 440–459 (AHLKDPMEDGPPEEAARALS) are disordered. Phosphoserine is present on residues Ser461 and Ser467. Residues 464–510 (LVSSPKYGSDDECSSASASSAGAGSNSGAGPGGALGSPRSNTLYGAP) are disordered. Residues 477–487 (SSASASSAGAG) show a composition bias toward low complexity. The span at 488-498 (SNSGAGPGGAL) shows a compositional bias: gly residues. The residue at position 500 (Ser500) is a Phosphoserine. A coiled-coil region spans residues 511-630 (GNLDTLLEEL…QQQQVVQLEG (120 aa)). The next 2 helical transmembrane spans lie at 646-666 (VILA…NFIT) and 679-699 (ALLL…TYLL).

This sequence belongs to the TEX28 family. As to quaternary structure, may form homodimers and heterodimers with TMCC2 or TMCC3 via the coiled-coil domains. Interacts with ribosomal proteins RPL4 and RPS6. Interacts with APOE and proteolytic processed C-terminal fragment C99 of the amyloid precursor protein (APP C99).

Its subcellular location is the endoplasmic reticulum membrane. May be involved in the regulation of the proteolytic processing of the amyloid precursor protein (APP) possibly also implicating APOE. The polypeptide is Transmembrane and coiled-coil domains protein 2 (Mus musculus (Mouse)).